A 694-amino-acid polypeptide reads, in one-letter code: Elongation factor G (694 aa).

Residues 8–287 (EDYRNFGIMA…AVISYLPSPV (280 aa)) enclose the tr-type G domain. Residues 17 to 24 (AHIDAGKT), 86 to 90 (DTPGH), and 140 to 143 (NKMD) contribute to the GTP site.

This sequence belongs to the TRAFAC class translation factor GTPase superfamily. Classic translation factor GTPase family. EF-G/EF-2 subfamily.

The protein localises to the cytoplasm. Catalyzes the GTP-dependent ribosomal translocation step during translation elongation. During this step, the ribosome changes from the pre-translocational (PRE) to the post-translocational (POST) state as the newly formed A-site-bound peptidyl-tRNA and P-site-bound deacylated tRNA move to the P and E sites, respectively. Catalyzes the coordinated movement of the two tRNA molecules, the mRNA and conformational changes in the ribosome. The protein is Elongation factor G of Bartonella quintana (strain Toulouse) (Rochalimaea quintana).